Reading from the N-terminus, the 839-residue chain is LPS-assembly protein LptD (839 aa).

An N-terminal signal peptide occupies residues 1–21 (MAIGITACVLSLINYQGLAYS).

This sequence belongs to the LptD family. As to quaternary structure, component of the lipopolysaccharide transport and assembly complex. Interacts with LptE and LptA.

It localises to the cell outer membrane. Functionally, together with LptE, is involved in the assembly of lipopolysaccharide (LPS) at the surface of the outer membrane. This is LPS-assembly protein LptD from Legionella pneumophila subsp. pneumophila (strain Philadelphia 1 / ATCC 33152 / DSM 7513).